The chain runs to 264 residues: Glutamate racemase (264 aa).

Substrate is bound by residues 11 to 12 (DS) and 43 to 44 (YG). Cysteine 74 (proton donor/acceptor) is an active-site residue. Substrate is bound at residue 75–76 (NT). Catalysis depends on cysteine 193, which acts as the Proton donor/acceptor. Residue 194-195 (TH) coordinates substrate.

Belongs to the aspartate/glutamate racemases family.

It catalyses the reaction L-glutamate = D-glutamate. Its pathway is cell wall biogenesis; peptidoglycan biosynthesis. Provides the (R)-glutamate required for cell wall biosynthesis. The chain is Glutamate racemase from Bifidobacterium longum (strain DJO10A).